Reading from the N-terminus, the 235-residue chain is Large ribosomal subunit protein uL1 (235 aa).

The protein belongs to the universal ribosomal protein uL1 family. In terms of assembly, part of the 50S ribosomal subunit.

Its function is as follows. Binds directly to 23S rRNA. The L1 stalk is quite mobile in the ribosome, and is involved in E site tRNA release. Protein L1 is also a translational repressor protein, it controls the translation of the L11 operon by binding to its mRNA. This Prochlorococcus marinus (strain MIT 9515) protein is Large ribosomal subunit protein uL1.